A 70-amino-acid polypeptide reads, in one-letter code: Large ribosomal subunit protein bL31 (70 aa).

The protein belongs to the bacterial ribosomal protein bL31 family. Type A subfamily. In terms of assembly, part of the 50S ribosomal subunit.

Binds the 23S rRNA. This is Large ribosomal subunit protein bL31 from Mycoplasma mobile (strain ATCC 43663 / 163K / NCTC 11711) (Mesomycoplasma mobile).